Reading from the N-terminus, the 189-residue chain is Large ribosomal subunit protein bL9 (189 aa).

Belongs to the bacterial ribosomal protein bL9 family.

Its function is as follows. Binds to the 23S rRNA. The protein is Large ribosomal subunit protein bL9 of Cereibacter sphaeroides (strain ATCC 17023 / DSM 158 / JCM 6121 / CCUG 31486 / LMG 2827 / NBRC 12203 / NCIMB 8253 / ATH 2.4.1.) (Rhodobacter sphaeroides).